Here is a 288-residue protein sequence, read N- to C-terminus: Prepilin leader peptidase/N-methyltransferase (288 aa).

A helical membrane pass occupies residues F14–Y34. Zn(2+) is bound by residues C71, C74, C96, and C99. The next 6 helical transmembrane spans lie at I103 to W123, A127 to I147, I158 to L178, V182 to V202, V227 to L247, and M254 to W274.

The protein belongs to the peptidase A24 family. Zn(2+) serves as cofactor.

It is found in the cell inner membrane. It catalyses the reaction Typically cleaves a -Gly-|-Phe- bond to release an N-terminal, basic peptide of 5-8 residues from type IV prepilin, and then N-methylates the new N-terminal amino group, the methyl donor being S-adenosyl-L-methionine.. Plays an essential role in type IV pili and type II pseudopili formation by proteolytically removing the leader sequence from substrate proteins and subsequently monomethylating the alpha-amino group of the newly exposed N-terminal phenylalanine. This is Prepilin leader peptidase/N-methyltransferase (pilD) from Pseudomonas putida (Arthrobacter siderocapsulatus).